Here is a 286-residue protein sequence, read N- to C-terminus: Ribosome-inactivating protein momordin II (286 aa).

The N-terminal stretch at 1–23 (MVKCLLLSFLIIAIFIGVPTAKG) is a signal peptide. Residue glutamate 181 is part of the active site.

The protein belongs to the ribosome-inactivating protein family. Type 1 RIP subfamily.

The catalysed reaction is Endohydrolysis of the N-glycosidic bond at one specific adenosine on the 28S rRNA.. This chain is Ribosome-inactivating protein momordin II, found in Momordica balsamina (Bitter gourd).